A 503-amino-acid chain; its full sequence is NAD(P)H-quinone oxidoreductase chain 4, chloroplastic (503 aa).

14 helical membrane-spanning segments follow: residues 3–23 (FFPW…IVFF), 37–57 (LCIC…HFQV), 84–104 (GLSV…TLAA), 113–130 (LFHF…GLFA), 134–154 (LFLF…LLSM), 167–187 (FILY…GLTL), 208–228 (ALEI…SPIL), 242–262 (HYST…YGLI), 274–294 (SLFS…AALT), 305–325 (IAYS…SMTD), 330–350 (GALL…FLAG), 385–405 (SLAL…FGII), 416–436 (ILIS…SLSM), and 462–482 (LFLS…PDFV).

This sequence belongs to the complex I subunit 4 family.

Its subcellular location is the plastid. It localises to the chloroplast thylakoid membrane. It carries out the reaction a plastoquinone + NADH + (n+1) H(+)(in) = a plastoquinol + NAD(+) + n H(+)(out). It catalyses the reaction a plastoquinone + NADPH + (n+1) H(+)(in) = a plastoquinol + NADP(+) + n H(+)(out). This Ipomoea purpurea (Common morning glory) protein is NAD(P)H-quinone oxidoreductase chain 4, chloroplastic.